Consider the following 271-residue polypeptide: DNA repair protein RecO (271 aa).

The disordered stretch occupies residues 248-271 (AVGVEDSVRQDGDRDSTTRTPSSA). The span at 253–264 (DSVRQDGDRDST) shows a compositional bias: basic and acidic residues.

Belongs to the RecO family.

Involved in DNA repair and RecF pathway recombination. This chain is DNA repair protein RecO, found in Rhodococcus opacus (strain B4).